The sequence spans 331 residues: Anthranilate phosphoribosyltransferase (331 aa).

5-phospho-alpha-D-ribose 1-diphosphate contacts are provided by residues Gly79, 82-83 (GD), Thr87, 89-92 (NIST), 107-115 (KHGNYGATS), and Ala119. Gly79 provides a ligand contact to anthranilate. Ser91 is a binding site for Mg(2+). Asn110 serves as a coordination point for anthranilate. Position 165 (Arg165) interacts with anthranilate. Residues Asp223 and Glu224 each coordinate Mg(2+).

Belongs to the anthranilate phosphoribosyltransferase family. As to quaternary structure, homodimer. Requires Mg(2+) as cofactor.

The enzyme catalyses N-(5-phospho-beta-D-ribosyl)anthranilate + diphosphate = 5-phospho-alpha-D-ribose 1-diphosphate + anthranilate. It participates in amino-acid biosynthesis; L-tryptophan biosynthesis; L-tryptophan from chorismate: step 2/5. Functionally, catalyzes the transfer of the phosphoribosyl group of 5-phosphorylribose-1-pyrophosphate (PRPP) to anthranilate to yield N-(5'-phosphoribosyl)-anthranilate (PRA). This Phocaeicola vulgatus (strain ATCC 8482 / DSM 1447 / JCM 5826 / CCUG 4940 / NBRC 14291 / NCTC 11154) (Bacteroides vulgatus) protein is Anthranilate phosphoribosyltransferase.